Here is a 207-residue protein sequence, read N- to C-terminus: Melanocortin-2 receptor accessory protein 2 (207 aa).

Residues 1–21 (MEMSAQRLASNRTSPQSPSNS) form a disordered region. The span at 7–21 (RLASNRTSPQSPSNS) shows a compositional bias: polar residues. A glycan (N-linked (GlcNAc...) asparagine) is linked at Asn-11. A helical transmembrane segment spans residues 47–67 (IVIGFWVGLAVFVIFMFFVLT). Phosphoserine is present on Ser-91.

It belongs to the MRAP family. As to quaternary structure, homodimer and heterodimer. Forms antiparallel homodimers and heterodimers with MRAP. Interacts with MC1R, MC2R, MC3R and MC5R. Interacts with MC4R. Predominantly expressed in the brain, mainly in the pons and cerebellum but also in regions involved in energy homeostasis, such as the hypothalamus and brainstem.

It is found in the cell membrane. It localises to the endoplasmic reticulum membrane. Functionally, modulator of melanocortin receptor 4 (MC4R), a receptor involved in energy homeostasis. Plays a central role in the control of energy homeostasis and body weight regulation by increasing ligand-sensitivity of MC4R and MC4R-mediated generation of cAMP. May also act as a negative regulator of MC2R: competes with MRAP for binding to MC2R and impairs the binding of corticotropin (ACTH) to MC2R. May also regulate activity of other melanocortin receptors (MC1R, MC3R and MC5R); however, additional evidence is required in vivo. The sequence is that of Melanocortin-2 receptor accessory protein 2 (Mrap2) from Mus musculus (Mouse).